Reading from the N-terminus, the 926-residue chain is Ubiquitin carboxyl-terminal hydrolase 4 (926 aa).

Positions 205–328 (SQMEILLIDI…WLKSNYGRQV (124 aa)) constitute a Rhodanese domain. Ser443 bears the Phosphoserine mark. A USP domain is found at 562–923 (VGLENLGNSC…NAYVLFYHRV (362 aa)). Catalysis depends on Cys571, which acts as the Nucleophile. His880 acts as the Proton acceptor in catalysis.

This sequence belongs to the peptidase C19 family. As to quaternary structure, interacts with BRO1, RFU1 and VPS32. Associates with the 26S proteasome.

Its subcellular location is the cytoplasm. It localises to the late endosome membrane. It carries out the reaction Thiol-dependent hydrolysis of ester, thioester, amide, peptide and isopeptide bonds formed by the C-terminal Gly of ubiquitin (a 76-residue protein attached to proteins as an intracellular targeting signal).. With respect to regulation, RFU1 is an inhibitor of deubiquitination activity. Its function is as follows. Ubiquitin thioesterase that acts at the late endosome/prevacuolar compartment to recover ubiquitin from ubiquitinated membrane proteins en route to the vacuole. Also removes ubiquitin from soluble proteins targeted to proteasomes. Is essential to maintain a normal level of free ubiquitin. Involved in the ammonium-induced down-regulation of the GAP1 permease and the UME3 destruction in response to oxidative stress. Has a role in the RAD9 checkpoint response to TOP1 poisons. Required for promoting coordination of DNA replication and avoids DNA overreplication. This chain is Ubiquitin carboxyl-terminal hydrolase 4 (DOA4), found in Saccharomyces cerevisiae (strain ATCC 204508 / S288c) (Baker's yeast).